Reading from the N-terminus, the 989-residue chain is Cation-chloride cotransporter 1 (989 aa).

Residues 1–10 (MENGEIEGAA) are compositionally biased toward acidic residues. A disordered region spans residues 1-29 (MENGEIEGAADDGVPVPAPPNGRRYRPVG). The Cytoplasmic portion of the chain corresponds to 1-132 (MENGEIEGAA…GRPKETGPKF (132 aa)). Residues 133–153 (GTMMGVFVPCLQNILGIIYYI) traverse the membrane as a helical segment. Topologically, residues 154–167 (RFTWIVGMAGVWQS) are extracellular. A helical membrane pass occupies residues 168–188 (LVLVSFCGACTFLTGISLSAI). Topologically, residues 189–214 (ATNGAMKGGGPYYLIGRALGPEVGVS) are cytoplasmic. The chain crosses the membrane as a helical span at residues 215 to 235 (IGLCFFLGNAVAGSMYVLGAV). Over 236–280 (ETFLDAVPSAGFFKESVTVVNNTLVNGTATASTATISTPSLHDLQ) the chain is Extracellular. Residues N256 and N261 are each glycosylated (N-linked (GlcNAc...) asparagine). The chain crosses the membrane as a helical span at residues 281–301 (VYGVIVTILLCFIVFGGVKII). At 302–304 (NKV) the chain is on the cytoplasmic side. The helical transmembrane segment at 305–325 (APAFLIPVLFSLLCIYLGVFI) threads the bilayer. At 326–365 (APRHNAPKGITGLSITTFKDNWGSEYQRTNNAGVPDPNGS) the chain is on the extracellular side. N363 carries an N-linked (GlcNAc...) asparagine glycan. Residues 366–386 (IYWDFNALVGLFFPAVTGIMA) traverse the membrane as a helical segment. At 387-405 (GSNRSASLKDTQRSIPIGT) the chain is on the cytoplasmic side. Residues 406–426 (LSATLTTTAMYLFSVLLFGAL) form a helical membrane-spanning segment. Over 427–441 (ATREELLTDRLLTAT) the chain is Extracellular. Residues 442 to 462 (VAWPAPAVIYIGIILSTLGAA) traverse the membrane as a helical segment. The Cytoplasmic portion of the chain corresponds to 463–498 (LQSLTGAPRLLAAIANDDILPVLNYFKVSEGAEPHS). A helical transmembrane segment spans residues 499 to 519 (ATLFTAFICICCVVIGNLDLI). The Extracellular portion of the chain corresponds to 520-522 (TPT). The chain crosses the membrane as a helical span at residues 523-543 (ITMFFLLCYAGVNLSCFLLDL). Residues 544 to 551 (LDAPSWRP) are Cytoplasmic-facing. The chain crosses the membrane as a helical span at residues 552–572 (RWKFHHWSLSLVGALLCVVIM). The Extracellular portion of the chain corresponds to 573–578 (FLISWS). A helical membrane pass occupies residues 579–599 (FTVVSLALASLIYYYVSLKGK). Residues 600–989 (AGDWGDGFKS…YRRDVVTFFT (390 aa)) lie on the Cytoplasmic side of the membrane.

Belongs to the SLC12A transporter family. As to expression, expressed in roots, stems and leaves with higher expression in root and leaf tips.

The protein resides in the membrane. In terms of biological role, probable cation/chloride cotransporter that may mediate potassium-chloride cotransport. Involved in plant development and K(+) and Cl(-) homeostasis. May not be involved in sodium-chloride cotransport. The chain is Cation-chloride cotransporter 1 (CCC1) from Oryza sativa subsp. japonica (Rice).